We begin with the raw amino-acid sequence, 344 residues long: Beta-1,4-galactosyltransferase 4 (344 aa).

The Cytoplasmic segment spans residues 1 to 12; the sequence is MGFNLTFHLSYK. The helical; Signal-anchor for type II membrane protein transmembrane segment at 13-38 threads the bilayer; it reads FRLLLLLTLCLTVVGWATSNYFVGAI. Residues 39–344 are Lumenal-facing; the sequence is QEIPKAKEFM…NITVDFWFGA (306 aa). Residues Cys-77 and Cys-118 are joined by a disulfide bond. Residues 129-133, 168-170, and 195-196 each bind UDP-alpha-D-galactose; these read PHRNR, FNR, and VD. An intrachain disulfide couples Cys-189 to Cys-208. Asp-196 contacts Mn(2+). N-linked (GlcNAc...) asparagine glycosylation occurs at Asn-220. UDP-alpha-D-galactose contacts are provided by Tyr-224 and Trp-256. 258–261 contacts N-acetyl-D-glucosamine; the sequence is GEDD. His-289 is a Mn(2+) binding site. UDP-alpha-D-galactose is bound at residue 289–291; sequence HTR. Position 301 (Arg-301) interacts with N-acetyl-D-glucosamine. An N-linked (GlcNAc...) asparagine glycan is attached at Asn-335.

This sequence belongs to the glycosyltransferase 7 family. In terms of assembly, interacts with SLC35A2 (isoform 2; UGT1). The cofactor is Mn(2+). N-glycosylated. Highest expression is observed in placenta, pancreas, kidney and heart. Expressed in corneal epithelial cells.

It is found in the golgi apparatus membrane. Its subcellular location is the secreted. It carries out the reaction N-acetyl-D-glucosamine + UDP-alpha-D-galactose = beta-D-galactosyl-(1-&gt;4)-N-acetyl-D-glucosamine + UDP + H(+). The catalysed reaction is a beta-D-GlcNAc-(1-&gt;3)-beta-D-Gal-(1-&gt;4)-beta-D-Glc-(1&lt;-&gt;1)-Cer(d18:1(4E)) + UDP-alpha-D-galactose = a neolactoside nLc4Cer(d18:1(4E)) + UDP + H(+). The enzyme catalyses 3-O-{beta-D-galactosyl-(1-&gt;3)-[6-O-sulfo-N-acetyl-beta-D-glucosaminyl-(1-&gt;6)]-N-acetyl-alpha-D-galactosaminyl}-L-seryl-[protein] + UDP-alpha-D-galactose = 3-O-{beta-D-galactosyl-(1-&gt;3)-[beta-D-galactosyl-(1-&gt;4)-6-O-sulfo-N-acetyl-beta-D-glucosaminyl-(1-&gt;6)]-N-acetyl-alpha-D-galactosaminyl}-L-seryl-[protein] + UDP + H(+). It catalyses the reaction 3-O-{beta-D-galactosyl-(1-&gt;3)-[6-O-sulfo-N-acetyl-beta-D-glucosaminyl-(1-&gt;6)]-N-acetyl-alpha-D-galactosaminyl}-L-threonyl-[protein] + UDP-alpha-D-galactose = 3-O-{beta-D-galactosyl-(1-&gt;3)-[beta-D-galactosyl-(1-&gt;4)-6-O-sulfo-N-acetyl-beta-D-glucosaminyl-(1-&gt;6)]-N-acetyl-alpha-D-galactosaminyl}-L-threonyl-[protein] + UDP + H(+). Its pathway is protein modification; protein glycosylation. It participates in glycolipid biosynthesis. With respect to regulation, up-regulated by LALBA. Functionally, galactose (Gal) transferase involved in the synthesis of terminal N-acetyllactosamine (LacNac) unit present on glycan chains of glycoproteins and glycosphingolipids. Catalyzes the transfer of Gal residue via a beta1-&gt;4 linkage from UDP-Gal to the non-reducing terminal N-acetyl glucosamine 6-O-sulfate (6-O-sulfoGlcNAc) in the linearly growing chain of both N- and O-linked keratan sulfate proteoglycans. Cooperates with B3GNT7 N-acetyl glucosamine transferase and CHST6 and CHST1 sulfotransferases to construct and elongate mono- and disulfated disaccharide units [-&gt;3Galbeta1-&gt;4(6-sulfoGlcNAcbeta)1-&gt;] and [-&gt;3(6-sulfoGalbeta)1-&gt;4(6-sulfoGlcNAcbeta)1-&gt;] within keratan sulfate polymer. Transfers Gal residue via a beta1-&gt;4 linkage to terminal 6-O-sulfoGlcNAc within the LacNac unit of core 2 O-glycans forming 6-sulfo-sialyl-Lewis X (sLex). May contribute to the generation of sLex epitope on mucin-type glycoproteins that serve as ligands for SELL/L-selectin, a major regulator of leukocyte migration. In the biosynthesis pathway of neolacto-series glycosphingolipids, transfers Gal residue via a beta1-&gt;4 linkage to terminal GlcNAc of a lactotriaosylceramide (Lc3Cer) acceptor to form a neolactotetraosylceramide. The chain is Beta-1,4-galactosyltransferase 4 from Homo sapiens (Human).